Here is a 98-residue protein sequence, read N- to C-terminus: RNA-binding protein Hfq (98 aa).

The Sm domain occupies 11–71; the sequence is DVFLNHVRRS…ISTVMPATPV (61 aa).

This sequence belongs to the Hfq family. Homohexamer.

In terms of biological role, RNA chaperone that binds small regulatory RNA (sRNAs) and mRNAs to facilitate mRNA translational regulation in response to envelope stress, environmental stress and changes in metabolite concentrations. Also binds with high specificity to tRNAs. This is RNA-binding protein Hfq from Gluconacetobacter diazotrophicus (strain ATCC 49037 / DSM 5601 / CCUG 37298 / CIP 103539 / LMG 7603 / PAl5).